Here is a 265-residue protein sequence, read N- to C-terminus: Small ribosomal subunit protein eS4 (265 aa).

Residues Leu-42–Asp-104 enclose the S4 RNA-binding domain.

The protein belongs to the eukaryotic ribosomal protein eS4 family.

The protein resides in the cytoplasm. This Oryza sativa subsp. japonica (Rice) protein is Small ribosomal subunit protein eS4 (RPS4).